Consider the following 409-residue polypeptide: Tryptophan synthase beta chain (409 aa).

Lysine 95 bears the N6-(pyridoxal phosphate)lysine mark.

This sequence belongs to the TrpB family. Tetramer of two alpha and two beta chains. The cofactor is pyridoxal 5'-phosphate.

The catalysed reaction is (1S,2R)-1-C-(indol-3-yl)glycerol 3-phosphate + L-serine = D-glyceraldehyde 3-phosphate + L-tryptophan + H2O. The protein operates within amino-acid biosynthesis; L-tryptophan biosynthesis; L-tryptophan from chorismate: step 5/5. The beta subunit is responsible for the synthesis of L-tryptophan from indole and L-serine. This Pseudomonas syringae pv. tomato (strain ATCC BAA-871 / DC3000) protein is Tryptophan synthase beta chain.